The chain runs to 119 residues: Microtubule nucleation factor SSNA1 (119 aa).

Thr2 carries the N-acetylthreonine modification. The interval 2–32 (TQQGAALQNYNNELVKCIEELCQKREELCRQ) is important for localization to the centrosome. Positions 13–70 (NELVKCIEELCQKREELCRQIQEEEDEKQRLQNEVRQLTEKLARVNENLARKIASRNE) form a coiled coil.

It belongs to the SSNA1 family. In terms of assembly, self-associates to form fibrils. Also forms dimers as well as monomers. Interacts with SPAST. Widely expressed.

It is found in the nucleus. Its subcellular location is the cytoplasm. The protein resides in the cytoskeleton. The protein localises to the microtubule organizing center. It localises to the centrosome. It is found in the centriole. Its subcellular location is the midbody. The protein resides in the flagellum basal body. The protein localises to the flagellum axoneme. It localises to the cell projection. It is found in the axon. Its function is as follows. Microtubule-binding protein which stabilizes dynamic microtubules by slowing growth and shrinkage at both plus and minus ends and serves as a sensor of microtubule damage, protecting microtubules from the microtubule-severing enzyme SPAST. Induces microtubule branching which is mediated by the formation of long SSNA1 fibrils which guide microtubule protofilaments to split apart from the mother microtubule and form daughter microtubules. Plays a role in axon outgrowth and branching. Required for cell division. In Homo sapiens (Human), this protein is Microtubule nucleation factor SSNA1.